A 259-amino-acid polypeptide reads, in one-letter code: L-cystine import ATP-binding protein TcyN (259 aa).

Positions isoleucine 2–leucine 239 constitute an ABC transporter domain. Residue glycine 34–threonine 41 coordinates ATP.

Belongs to the ABC transporter superfamily. L-cystine importer (TC 3.A.1.3.13) family. As to quaternary structure, the complex is composed of two ATP-binding proteins (TcyN), two transmembrane proteins (TcyL and TcyM) and two solute-binding proteins (TcyJ and TcyK).

Its subcellular location is the cell membrane. Functionally, part of the ABC transporter complex TcyJKLMN involved in L-cystine import. Responsible for energy coupling to the transport system. Is also involved in cystathionine, djenkolate, and S-methylcysteine transport. The polypeptide is L-cystine import ATP-binding protein TcyN (tcyN) (Bacillus subtilis (strain 168)).